A 576-amino-acid chain; its full sequence is Calmodulin-binding protein 60 B (576 aa).

A disordered region spans residues 1–25 (MMLPTKRPAPDHGDDERNEVMVPEP). The tract at residues 1–80 (MMLPTKRPAP…HPSSRPSLNR (80 aa)) is calmodulin-binding. The segment covering 8 to 25 (PAPDHGDDERNEVMVPEP) has biased composition (basic and acidic residues). The segment at 150 to 273 (DERQDWTENE…AFHKRLAYKN (124 aa)) is DNA-binding.

Belongs to the plant ACBP60 protein family. (Microbial infection) Interacts with V.dahliae SCP41. In terms of assembly, interacts with calmodulin (CaM).

It is found in the nucleus. Functionally, transcription activator that binds DNA in a sequence-specific manner, likely 5'-GAAATTTTGG-3', to promote the expression of target genes. Required for pathogen resistance. This Gossypium hirsutum (Upland cotton) protein is Calmodulin-binding protein 60 B.